Consider the following 331-residue polypeptide: Nucleotide sugar transporter SLC35B4 (331 aa).

11 consecutive transmembrane segments (helical) span residues 4 to 24, 30 to 50, 59 to 79, 92 to 112, 117 to 137, 153 to 173, 201 to 221, 229 to 249, 251 to 267, 268 to 288, and 291 to 311; these read ALAV…LELL, GCGN…GFLF, PAIP…VSVV, LHMI…IIIL, SIFK…CTFM, GFQA…ALLM, ALPL…AVLF, IPGI…NIIT, YVCI…CASL, TVTL…ILYF, and PFTL…LMYT. The Mediates endoplasmic reticulum retention motif lies at 326–331; that stretch reads KDNKKN.

Belongs to the nucleotide-sugar transporter family. SLC35B subfamily.

The protein resides in the endoplasmic reticulum membrane. It catalyses the reaction UDP-N-acetyl-alpha-D-glucosamine(in) + UDP-alpha-D-glucuronate(out) = UDP-N-acetyl-alpha-D-glucosamine(out) + UDP-alpha-D-glucuronate(in). The enzyme catalyses UDP-alpha-D-xylose(in) + UDP-alpha-D-glucuronate(out) = UDP-alpha-D-xylose(out) + UDP-alpha-D-glucuronate(in). In terms of biological role, antiporter that transports nucleotide sugars across the endoplasmic reticulum (ER) membrane in exchange for another nucleotide sugar. May couple UDP-alpha-D-glucuronate (UDP-GlcA) or UDP-alpha-D-xylose (UDP-Xyl) efflux to UDP-alpha-D-glucuronate (UDP-GlcA) influx into the ER lumen, which in turn stimulates glucuronidation and excretion of endobiotics and xenobiotics. The chain is Nucleotide sugar transporter SLC35B4 (SLC35B4) from Macaca fascicularis (Crab-eating macaque).